Consider the following 1880-residue polypeptide: Nonribosomal peptide synthetase otaB (1880 aa).

Residues 205–594 (AQAVERGNSI…SVSFVGRRQA (390 aa)) are adenylation 1. Residues 728 to 804 (LPLSPLERQI…ELGAHLEQEA (77 aa)) enclose the Carrier domain. Position 765 is an O-(pantetheine 4'-phosphoryl)serine (Ser-765). The interval 840 to 1250 (EDVYPCTALQ…LLSPQDQQQL (411 aa)) is condensation. Residues 1269–1665 (QRQCLAHPQK…GRKDRQVKLR (397 aa)) are adenylation 2.

The protein belongs to the NRP synthetase family.

It carries out the reaction 7-carboxymellein + L-phenylalanine + ATP = ochratoxin B + ADP + phosphate + H(+). Its pathway is mycotoxin biosynthesis. In terms of biological role, nonribosomal peptide synthetase; part of the gene cluster that mediates the biosynthesis of ochratoxin A (OTA), a mycotoxin composed of a chlorinated type I polyketide dihydroisocoumarin moiety linked to L-phenylalanine, and demonstrated to have nephrotoxic, immunotoxic, genotoxic, neurotoxic, and teratogenic properties. OtaB is responsible for the linking of phenylalanine to the dihydroisocoumarin ring. The pathway begins with the highly reducing polyketide synthase otaA that catalyzes the formation of the isocoumarin group during the initial stages of biosynthesis, starting from one acetate and 4 malonate units, to originate the characteristic pentaketide skeleton 7-methylmellein (7-MM) of the OTA molecule. The newly identified cyclase otaY might be involved in the polyketide cyclization reaction during the initial steps of the OTA biosynthesis. 7-MM is then oxidized into 7-carboxymellein (also called ochratoxin beta) by the cytochrome P450 monooxygenase otaC. The NRPS encoded by the otaB gene is involved in the linking of phenylalanine to the dihydroisocoumarin ring. The reaction catalyzed by NRPS results in the production of ochratoxin B (OTB), which is the non-chlorinated analog of OTA and which subsequently serves as the substrate of the halogenase otaD for chlorination activity to form the final molecular structure of OTA, containing a chlorine atom in the C-5 position of the molecule. This is Nonribosomal peptide synthetase otaB from Aspergillus niger (strain ATCC MYA-4892 / CBS 513.88 / FGSC A1513).